The primary structure comprises 484 residues: Folate synthesis bifunctional protein (484 aa).

Residues 15–141 form an HPPK region; sequence VIALGSNVGN…PFVLAPLVDL (127 aa). In terms of domain architecture, Pterin-binding spans 202–470; that stretch reads TYVMGILNLT…NVRDNVDAAR (269 aa). Residues 204–484 form a DHPS region; sequence VMGILNLTPD…MMTKRFKNVD (281 aa). A Mg(2+)-binding site is contributed by asparagine 209. Residues threonine 249, aspartate 286, asparagine 305, aspartate 378, lysine 423, and 458–460 contribute to the (7,8-dihydropterin-6-yl)methyl diphosphate site; that span reads RVH.

This sequence in the N-terminal section; belongs to the HPPK family. It in the C-terminal section; belongs to the DHPS family. Requires Mg(2+) as cofactor. In terms of tissue distribution, expressed exclusively in reproductive tissues.

It localises to the cytoplasm. Its subcellular location is the cytosol. It carries out the reaction 6-hydroxymethyl-7,8-dihydropterin + ATP = (7,8-dihydropterin-6-yl)methyl diphosphate + AMP + H(+). The catalysed reaction is (7,8-dihydropterin-6-yl)methyl diphosphate + 4-aminobenzoate = 7,8-dihydropteroate + diphosphate. It functions in the pathway cofactor biosynthesis; tetrahydrofolate biosynthesis; 2-amino-4-hydroxy-6-hydroxymethyl-7,8-dihydropteridine diphosphate from 7,8-dihydroneopterin triphosphate: step 4/4. Its pathway is cofactor biosynthesis; tetrahydrofolate biosynthesis; 7,8-dihydrofolate from 2-amino-4-hydroxy-6-hydroxymethyl-7,8-dihydropteridine diphosphate and 4-aminobenzoate: step 1/2. Inhibited by sulfanilamide. In terms of biological role, catalyzes the first two consecutive steps of tetrahydrofolate biosynthesis. Plays a role in seed stress response and survival. The chain is Folate synthesis bifunctional protein from Arabidopsis thaliana (Mouse-ear cress).